Reading from the N-terminus, the 91-residue chain is Large ribosomal subunit protein bL31B (91 aa).

The protein belongs to the bacterial ribosomal protein bL31 family. Type B subfamily. As to quaternary structure, part of the 50S ribosomal subunit.

This Neisseria meningitidis serogroup A / serotype 4A (strain DSM 15465 / Z2491) protein is Large ribosomal subunit protein bL31B.